We begin with the raw amino-acid sequence, 204 residues long: FMN-dependent NADH:quinone oxidoreductase (204 aa).

Residues S9, 15–17 (SVS), 95–98 (MYNF), and 139–142 (SRGG) each bind FMN.

The protein belongs to the azoreductase type 1 family. Homodimer. FMN is required as a cofactor.

It carries out the reaction 2 a quinone + NADH + H(+) = 2 a 1,4-benzosemiquinone + NAD(+). The enzyme catalyses N,N-dimethyl-1,4-phenylenediamine + anthranilate + 2 NAD(+) = 2-(4-dimethylaminophenyl)diazenylbenzoate + 2 NADH + 2 H(+). Functionally, quinone reductase that provides resistance to thiol-specific stress caused by electrophilic quinones. Its function is as follows. Also exhibits azoreductase activity. Catalyzes the reductive cleavage of the azo bond in aromatic azo compounds to the corresponding amines. In Methylocella silvestris (strain DSM 15510 / CIP 108128 / LMG 27833 / NCIMB 13906 / BL2), this protein is FMN-dependent NADH:quinone oxidoreductase.